Here is a 381-residue protein sequence, read N- to C-terminus: Dual-specificity RNA methyltransferase RlmN (381 aa).

Glutamate 96 serves as the catalytic Proton acceptor. A Radical SAM core domain is found at 102 to 342 (TDDRGTLCVS…TRTTRGDDID (241 aa)). A disulfide bridge connects residues cysteine 109 and cysteine 345. The [4Fe-4S] cluster site is built by cysteine 116, cysteine 120, and cysteine 123. S-adenosyl-L-methionine-binding positions include 170-171 (GE), serine 202, 224-226 (SLH), and asparagine 302. Catalysis depends on cysteine 345, which acts as the S-methylcysteine intermediate.

The protein belongs to the radical SAM superfamily. RlmN family. The cofactor is [4Fe-4S] cluster.

The protein localises to the cytoplasm. It catalyses the reaction adenosine(2503) in 23S rRNA + 2 reduced [2Fe-2S]-[ferredoxin] + 2 S-adenosyl-L-methionine = 2-methyladenosine(2503) in 23S rRNA + 5'-deoxyadenosine + L-methionine + 2 oxidized [2Fe-2S]-[ferredoxin] + S-adenosyl-L-homocysteine. The catalysed reaction is adenosine(37) in tRNA + 2 reduced [2Fe-2S]-[ferredoxin] + 2 S-adenosyl-L-methionine = 2-methyladenosine(37) in tRNA + 5'-deoxyadenosine + L-methionine + 2 oxidized [2Fe-2S]-[ferredoxin] + S-adenosyl-L-homocysteine. Functionally, specifically methylates position 2 of adenine 2503 in 23S rRNA and position 2 of adenine 37 in tRNAs. m2A2503 modification seems to play a crucial role in the proofreading step occurring at the peptidyl transferase center and thus would serve to optimize ribosomal fidelity. The sequence is that of Dual-specificity RNA methyltransferase RlmN from Pseudomonas putida (strain W619).